The chain runs to 169 residues: Crossover junction endodeoxyribonuclease RuvC (169 aa).

Catalysis depends on residues Asp-7, Glu-67, and Asp-140. 3 residues coordinate Mg(2+): Asp-7, Glu-67, and Asp-140.

It belongs to the RuvC family. As to quaternary structure, homodimer which binds Holliday junction (HJ) DNA. The HJ becomes 2-fold symmetrical on binding to RuvC with unstacked arms; it has a different conformation from HJ DNA in complex with RuvA. In the full resolvosome a probable DNA-RuvA(4)-RuvB(12)-RuvC(2) complex forms which resolves the HJ. Mg(2+) is required as a cofactor.

It localises to the cytoplasm. The enzyme catalyses Endonucleolytic cleavage at a junction such as a reciprocal single-stranded crossover between two homologous DNA duplexes (Holliday junction).. Its function is as follows. The RuvA-RuvB-RuvC complex processes Holliday junction (HJ) DNA during genetic recombination and DNA repair. Endonuclease that resolves HJ intermediates. Cleaves cruciform DNA by making single-stranded nicks across the HJ at symmetrical positions within the homologous arms, yielding a 5'-phosphate and a 3'-hydroxyl group; requires a central core of homology in the junction. The consensus cleavage sequence is 5'-(A/T)TT(C/G)-3'. Cleavage occurs on the 3'-side of the TT dinucleotide at the point of strand exchange. HJ branch migration catalyzed by RuvA-RuvB allows RuvC to scan DNA until it finds its consensus sequence, where it cleaves and resolves the cruciform DNA. In Clostridioides difficile (strain 630) (Peptoclostridium difficile), this protein is Crossover junction endodeoxyribonuclease RuvC.